An 88-amino-acid chain; its full sequence is Small ribosomal subunit protein bS20 (88 aa).

Positions 1 to 21 (MANSAQAKKRARQNVKARKHN) are disordered. The span at 7 to 21 (AKKRARQNVKARKHN) shows a compositional bias: basic residues.

Belongs to the bacterial ribosomal protein bS20 family.

Binds directly to 16S ribosomal RNA. The chain is Small ribosomal subunit protein bS20 from Acinetobacter baumannii (strain AB307-0294).